The chain runs to 428 residues: GTPase Obg (428 aa).

The Obg domain occupies 1-158; that stretch reads MFIDIAKVFI…LSIVLELKLL (158 aa). In terms of domain architecture, OBG-type G spans 159–331; sequence ADVGLLGFPN…VIKEAARMLK (173 aa). GTP-binding positions include 165 to 172, 190 to 194, 212 to 215, 282 to 285, and 312 to 314; these read GFPNVGKS, FTTLK, DIPG, NKSD, and SAA. 2 residues coordinate Mg(2+): S172 and T192. An OCT domain is found at 345 to 428; sequence MYIPEEKKFT…LNDFEFEYLL (84 aa).

Belongs to the TRAFAC class OBG-HflX-like GTPase superfamily. OBG GTPase family. In terms of assembly, monomer. Mg(2+) serves as cofactor.

It is found in the cytoplasm. Its function is as follows. An essential GTPase which binds GTP, GDP and possibly (p)ppGpp with moderate affinity, with high nucleotide exchange rates and a fairly low GTP hydrolysis rate. Plays a role in control of the cell cycle, stress response, ribosome biogenesis and in those bacteria that undergo differentiation, in morphogenesis control. The chain is GTPase Obg from Clostridium botulinum (strain Alaska E43 / Type E3).